Consider the following 106-residue polypeptide: Small ribosomal subunit protein uS10 (106 aa).

Belongs to the universal ribosomal protein uS10 family. Part of the 30S ribosomal subunit.

In terms of biological role, involved in the binding of tRNA to the ribosomes. This is Small ribosomal subunit protein uS10 from Pyrobaculum neutrophilum (strain DSM 2338 / JCM 9278 / NBRC 100436 / V24Sta) (Thermoproteus neutrophilus).